Here is a 156-residue protein sequence, read N- to C-terminus: ATP synthase subunit b (156 aa).

A helical membrane pass occupies residues 1–21 (MSINATLLIQIIAFVLLIWFV).

The protein belongs to the ATPase B chain family. F-type ATPases have 2 components, F(1) - the catalytic core - and F(0) - the membrane proton channel. F(1) has five subunits: alpha(3), beta(3), gamma(1), delta(1), epsilon(1). F(0) has three main subunits: a(1), b(2) and c(10-14). The alpha and beta chains form an alternating ring which encloses part of the gamma chain. F(1) is attached to F(0) by a central stalk formed by the gamma and epsilon chains, while a peripheral stalk is formed by the delta and b chains.

It is found in the cell inner membrane. In terms of biological role, f(1)F(0) ATP synthase produces ATP from ADP in the presence of a proton or sodium gradient. F-type ATPases consist of two structural domains, F(1) containing the extramembraneous catalytic core and F(0) containing the membrane proton channel, linked together by a central stalk and a peripheral stalk. During catalysis, ATP synthesis in the catalytic domain of F(1) is coupled via a rotary mechanism of the central stalk subunits to proton translocation. Functionally, component of the F(0) channel, it forms part of the peripheral stalk, linking F(1) to F(0). This chain is ATP synthase subunit b, found in Hydrogenovibrio crunogenus (strain DSM 25203 / XCL-2) (Thiomicrospira crunogena).